The primary structure comprises 218 residues: Probable carboxylesterase clz11 (218 aa).

Residues 7-9 (LVG) carry the Involved in the stabilization of the negatively charged intermediate by the formation of the oxyanion hole motif. The active site involves Ser77.

This sequence belongs to the 'GDXG' lipolytic enzyme family.

It carries out the reaction a carboxylic ester + H2O = an alcohol + a carboxylate + H(+). It participates in secondary metabolite biosynthesis. Functionally, probable carboxylesterase; part of the gene cluster that mediates the biosynthesis of squalestatin S1 (SQS1, also known as zaragozic acid A), a heavily oxidized fungal polyketide that offers potent cholesterol lowering activity by targeting squalene synthase (SS). SQS1 is composed of a 2,8-dioxobicyclic[3.2.1]octane-3,4,5-tricarboxyclic acid core that is connected to two lipophilic polyketide arms. These initial steps feature the priming of an unusual benzoic acid starter unit onto the highly reducing polyketide synthase clz14, followed by oxaloacetate extension and product release to generate a tricarboxylic acid containing product. The phenylalanine ammonia lyase (PAL) clz10 and the acyl-CoA ligase clz12 are involved in transforming phenylalanine into benzoyl-CoA. The citrate synthase-like protein clz17 is involved in connecting the C-alpha-carbons of the hexaketide chain and oxaloacetate to afford the tricarboxylic acid unit. The potential hydrolytic enzymes, clz11 and clz13, are in close proximity to pks2 and may participate in product release. On the other side, the tetraketide arm is synthesized by a the squalestatin tetraketide synthase clz2 and enzymatically esterified to the core in the last biosynthetic step, by the acetyltransferase clz6. The biosynthesis of the tetraketide must involve 3 rounds of chain extension. After the first and second rounds methyl-transfer occurs, and in all rounds of extension the ketoreductase and dehydratase are active. The enoyl reductase and C-MeT of clz2 are not active in the final round of extension. The acetyltransferase clz6 appears to have a broad substrate selectivity for its acyl CoA substrate, allowing the in vitro synthesis of novel squalestatins. The biosynthesis of SQS1 requires several oxidative steps likely performed by oxidoreductases clz3, clz15 and clz16. Finally, in support of the identification of the cluster as being responsible for SQS1 production, the cluster contains a gene encoding a putative squalene synthase (SS) clz20, suggesting a likely mechanism for self-resistance. This chain is Probable carboxylesterase clz11, found in Cochliobolus lunatus (Filamentous fungus).